The following is a 549-amino-acid chain: Urocanate hydratase (549 aa).

NAD(+)-binding positions include 46–47, Q124, 170–172, E190, R195, 236–237, 257–261, 267–268, and Y316; these read GG, GMG, NA, QTSAH, and YV. C404 is an active-site residue. G486 contacts NAD(+).

The protein belongs to the urocanase family. The cofactor is NAD(+).

The protein resides in the cytoplasm. The enzyme catalyses 4-imidazolone-5-propanoate = trans-urocanate + H2O. Its pathway is amino-acid degradation; L-histidine degradation into L-glutamate; N-formimidoyl-L-glutamate from L-histidine: step 2/3. In terms of biological role, catalyzes the conversion of urocanate to 4-imidazolone-5-propionate. This is Urocanate hydratase from Natranaerobius thermophilus (strain ATCC BAA-1301 / DSM 18059 / JW/NM-WN-LF).